We begin with the raw amino-acid sequence, 323 residues long: Isoeugenol synthase 1 (323 aa).

NADP(+) contacts are provided by residues 14 to 17 (TGYL), 36 to 47 (VMPLKKNSDDSK), 88 to 90 (VPQ), 113 to 115 (SEF), lysine 135, and 155 to 157 (NSL). Lysine 135 (proton donor/acceptor) is an active-site residue.

The protein belongs to the NmrA-type oxidoreductase family. In terms of tissue distribution, expressed in flowers, especially in corolla and tubes of petals, probably in both epidermal and mesophyll cell layers.

The enzyme catalyses (E)-isoeugenol + acetate + NADP(+) = (E)-coniferyl acetate + NADPH. Its pathway is aromatic compound metabolism; phenylpropanoid biosynthesis. Its activity is regulated as follows. Inhibited by zinc and copper ions. Repressed by 4-bromo-cinnamyl acetate. In terms of biological role, involved in the biosynthesis of the floral volatile isoeugenol. Catalyzes the synthesis of the phenylpropene isoeugenol from coniferyl acetate. Phenylpropenes are the primary constituents of various essential plant oils. They are produced as antimicrobial and antianimal compounds, or as floral attractants of pollinators. Isoeugenol is a characteristic aromatic constituent of spices and a floral volatile compound. The polypeptide is Isoeugenol synthase 1 (Petunia hybrida (Petunia)).